The sequence spans 199 residues: Charged multivesicular body protein 1b (199 aa).

Coiled coils occupy residues 8–42 (LFNL…AIQK) and 178–199 (TSVA…RDQV). The disordered stretch occupies residues 167–199 (ELPQGQTGSVGTSVASTEQDELSQRLARLRDQV). A compositionally biased stretch (polar residues) spans 170–183 (QGQTGSVGTSVAST). The MIT-interacting motif motif lies at 186–196 (DELSQRLARLR).

This sequence belongs to the SNF7 family. Probable peripherally associated component of the endosomal sorting required for transport complex III (ESCRT-III).

The protein localises to the cytoplasm. Its subcellular location is the cytosol. The protein resides in the endosome. It localises to the late endosome membrane. Functionally, probable peripherally associated component of the endosomal sorting required for transport complex III (ESCRT-III) which is involved in multivesicular bodies (MVBs) formation and sorting of endosomal cargo proteins into MVBs. MVBs contain intraluminal vesicles (ILVs) that are generated by invagination and scission from the limiting membrane of the endosome and mostly are delivered to lysosomes enabling degradation of membrane proteins, such as stimulated growth factor receptors, lysosomal enzymes and lipids. This chain is Charged multivesicular body protein 1b (chmp1b), found in Xenopus laevis (African clawed frog).